The primary structure comprises 394 residues: 3-phenylpropionate/cinnamic acid dioxygenase ferredoxin--NAD(+) reductase component (394 aa).

Residue 5-36 (TFIIVGAGQAGAMAAATLRQQQFDGDIILIGK) coordinates FAD. 146-174 (RILIVGGGVIGLELAATSCELGANVTVIE) is a binding site for NAD(+).

Belongs to the bacterial ring-hydroxylating dioxygenase ferredoxin reductase family. As to quaternary structure, this dioxygenase system consists of four proteins: the two subunits of the hydroxylase component (HcaE and HcaF), a ferredoxin (HcaC) and a ferredoxin reductase (HcaD). It depends on FAD as a cofactor.

The catalysed reaction is 2 reduced [2Fe-2S]-[ferredoxin] + NAD(+) + H(+) = 2 oxidized [2Fe-2S]-[ferredoxin] + NADH. The protein operates within aromatic compound metabolism; 3-phenylpropanoate degradation. Functionally, part of the multicomponent 3-phenylpropionate dioxygenase, that converts 3-phenylpropionic acid (PP) and cinnamic acid (CI) into 3-phenylpropionate-dihydrodiol (PP-dihydrodiol) and cinnamic acid-dihydrodiol (CI-dihydrodiol), respectively. The chain is 3-phenylpropionate/cinnamic acid dioxygenase ferredoxin--NAD(+) reductase component from Photorhabdus laumondii subsp. laumondii (strain DSM 15139 / CIP 105565 / TT01) (Photorhabdus luminescens subsp. laumondii).